The chain runs to 629 residues: Phosphomethylpyrimidine synthase (629 aa).

The segment at methionine 1–lysine 30 is disordered. Residues asparagine 233, methionine 262, tyrosine 291, histidine 327, serine 347–glycine 349, aspartate 388–arginine 391, and glutamate 427 each bind substrate. Residue histidine 431 participates in Zn(2+) binding. Residue tyrosine 454 participates in substrate binding. Histidine 495 contributes to the Zn(2+) binding site. The [4Fe-4S] cluster site is built by cysteine 575, cysteine 578, and cysteine 583.

The protein belongs to the ThiC family. As to quaternary structure, homodimer. [4Fe-4S] cluster is required as a cofactor.

The enzyme catalyses 5-amino-1-(5-phospho-beta-D-ribosyl)imidazole + S-adenosyl-L-methionine = 4-amino-2-methyl-5-(phosphooxymethyl)pyrimidine + CO + 5'-deoxyadenosine + formate + L-methionine + 3 H(+). It participates in cofactor biosynthesis; thiamine diphosphate biosynthesis. Functionally, catalyzes the synthesis of the hydroxymethylpyrimidine phosphate (HMP-P) moiety of thiamine from aminoimidazole ribotide (AIR) in a radical S-adenosyl-L-methionine (SAM)-dependent reaction. The polypeptide is Phosphomethylpyrimidine synthase (Pseudomonas fluorescens (strain ATCC BAA-477 / NRRL B-23932 / Pf-5)).